A 216-amino-acid chain; its full sequence is MEMLPNQTIYINNLNEKIKKEELKKSLYAIFSQFGQILDIVALKTLKMRGQAFVIFKEIGSASNALRTMQGFPFYDKPMQIAYSKSDSDIVAKIKGTFKERPKKVKPPKPAPGTDEKKDKKKKPSSAENSNPNAQTEQPPNQILFLTNLPEETNEMMLSMLFNQFPGFKEVRLVPNRHDIAFVEFTTELQSNAAKEALQGFKITPTHAMKITFAKK.

2 RRM domains span residues 7-86 (QTIY…YSKS) and 142-216 (QILF…FAKK). Residues 97 to 142 (TFKERPKKVKPPKPAPGTDEKKDKKKKPSSAENSNPNAQTEQPPNQ) are disordered. Residues 126–142 (SAENSNPNAQTEQPPNQ) show a composition bias toward polar residues.

The protein belongs to the RRM U1 A/B'' family. In terms of assembly, belongs to the spliceosome where it is associated with snRNP U1. Interacts with the SMN complex.

The protein localises to the nucleus. Its function is as follows. Binds stem loop II of U1 snRNA. It is the first snRNP to interact with pre-mRNA. This interaction is required for the subsequent binding of U2 snRNP and the U4/U6/U5 tri-snRNP. Plays a role in regulating sex-lethal splicing. In Drosophila melanogaster (Fruit fly), this protein is U1 small nuclear ribonucleoprotein A (snf).